The sequence spans 255 residues: tRNA (guanine-N(7)-)-methyltransferase (255 aa).

Residues 1-30 form a disordered region; sequence MMHDDPNEAGLPPDDAALPDEAADGADEVN. Residues 17-27 show a composition bias toward acidic residues; the sequence is ALPDEAADGAD. Positions 86, 111, 138, and 161 each coordinate S-adenosyl-L-methionine. The active site involves Asp-161. Substrate is bound by residues Lys-165, Asp-197, and 232–235; that span reads TKFE.

Belongs to the class I-like SAM-binding methyltransferase superfamily. TrmB family.

It catalyses the reaction guanosine(46) in tRNA + S-adenosyl-L-methionine = N(7)-methylguanosine(46) in tRNA + S-adenosyl-L-homocysteine. The protein operates within tRNA modification; N(7)-methylguanine-tRNA biosynthesis. In terms of biological role, catalyzes the formation of N(7)-methylguanine at position 46 (m7G46) in tRNA. This chain is tRNA (guanine-N(7)-)-methyltransferase, found in Burkholderia vietnamiensis (strain G4 / LMG 22486) (Burkholderia cepacia (strain R1808)).